A 254-amino-acid polypeptide reads, in one-letter code: Ciliary microtubule associated protein 1A (254 aa).

STPGR repeat units lie at residues P180–R205 and P216–K241. The interval E207–L228 is disordered.

The protein belongs to the CIMAP family. As to quaternary structure, microtubule inner protein component of sperm flagellar doublet microtubules. As to expression, testis-specific (at protein level). Expression restricted to the germ cell fraction, absent in somatic cell fractions such as Sertoli and Leydig cells. Expression detected in the third week postpartum (23 days) after haploid germ cells developed, expression increased with age. Expressed in the tails of elongated spermatids sticking out toward the tubular lumen, and in cytoplasmic droplets still attached to the spermatid tail membrane. Expressed in the tails of mature sperm, from the connecting piece proximal to the head, along the middle and principal pieces, down to the distal end piece.

The protein localises to the cytoplasm. It is found in the cytoskeleton. It localises to the flagellum axoneme. Outer dense fibers are filamentous structures located on the outside of the axoneme in the midpiece and principal piece of the mammalian sperm tail. May help to maintain the passive elastic structures and elastic recoil of the sperm tail. The sequence is that of Ciliary microtubule associated protein 1A (Cimap1a) from Mus musculus (Mouse).